Here is a 158-residue protein sequence, read N- to C-terminus: Putative peptidoglycan-binding-like protein (158 aa).

Positions 1–24 (MRSPKVKFLTIFTFCIFITKMSFA) are cleaved as a signal peptide.

Belongs to the IagB/IpgF/P19 family.

It localises to the periplasm. The sequence is that of Putative peptidoglycan-binding-like protein (pbl) from Escherichia coli (strain K12).